Reading from the N-terminus, the 396-residue chain is Proton-coupled antiporter flippase LtaA (396 aa).

12 helical membrane passes run 15-34 (FILM…MYIL), 46-73 (IAVA…GFLL), 80-99 (IVLT…VIWF), 105-126 (VIIF…IMLS), 138-159 (GYVY…NLLI), 165-184 (RFAF…YYFV), 211-231 (LLLF…VPIL), 243-264 (TIEY…MLFL), 276-298 (MYGV…SMIV), 304-326 (WIIA…TFMA), 338-358 (WGVF…FGGL), and 370-390 (FYFS…YFIA).

This sequence belongs to the major facilitator superfamily. LtaA family.

The protein localises to the cell membrane. It participates in cell wall biogenesis; lipoteichoic acid biosynthesis. Its function is as follows. Proton-coupled antiporter flippase that catalyzes the translocation, from the inner to the outer leaflet of the cell membrane, of the lipid-linked disaccharide (anchor-LLD) that anchors lipoteichoic acids (LTA) to the cell membrane. The protein is Proton-coupled antiporter flippase LtaA (ltaA) of Staphylococcus aureus (strain Mu50 / ATCC 700699).